We begin with the raw amino-acid sequence, 262 residues long: Trypsin theta (262 aa).

The signal sequence occupies residues 1–19 (MHRLVVLLVCLAVGSACAG). Positions 20–34 (TVGVSNGDPFEREGR) are cleaved as a propeptide — activation peptide. Positions 35–260 (IVGGEDTTIG…LRKWILNASE (226 aa)) constitute a Peptidase S1 domain. A disulfide bridge links C61 with C77. Active-site charge relay system residues include H76 and D121. Intrachain disulfides connect C186/C203 and C212/C236. Residue S216 is the Charge relay system of the active site.

It belongs to the peptidase S1 family.

The protein resides in the secreted. It localises to the extracellular space. It catalyses the reaction Preferential cleavage: Arg-|-Xaa, Lys-|-Xaa.. This Drosophila melanogaster (Fruit fly) protein is Trypsin theta (thetaTry).